A 633-amino-acid polypeptide reads, in one-letter code: Threonine--tRNA ligase (633 aa).

The TGS domain maps to 1-59; that stretch reads MIRITFSAEQKVKEYSGKVTGFDILQPDVLKEAIAFKVNGELHDLSREIEADAEIEVIQ. The interval 240 to 532 is catalytic; it reads DHRKIAKDMD…LIENYAGKFP (293 aa). Residues C332, H383, and H509 each contribute to the Zn(2+) site.

The protein belongs to the class-II aminoacyl-tRNA synthetase family. Homodimer. Zn(2+) serves as cofactor.

The protein localises to the cytoplasm. It carries out the reaction tRNA(Thr) + L-threonine + ATP = L-threonyl-tRNA(Thr) + AMP + diphosphate + H(+). In terms of biological role, catalyzes the attachment of threonine to tRNA(Thr) in a two-step reaction: L-threonine is first activated by ATP to form Thr-AMP and then transferred to the acceptor end of tRNA(Thr). Also edits incorrectly charged L-seryl-tRNA(Thr). The sequence is that of Threonine--tRNA ligase from Wolbachia sp. subsp. Drosophila simulans (strain wRi).